The following is a 120-amino-acid chain: Large ribosomal subunit protein bL12 (120 aa).

It belongs to the bacterial ribosomal protein bL12 family. In terms of assembly, homodimer. Part of the ribosomal stalk of the 50S ribosomal subunit. Forms a multimeric L10(L12)X complex, where L10 forms an elongated spine to which 2 to 4 L12 dimers bind in a sequential fashion. Binds GTP-bound translation factors.

Its function is as follows. Forms part of the ribosomal stalk which helps the ribosome interact with GTP-bound translation factors. Is thus essential for accurate translation. The protein is Large ribosomal subunit protein bL12 of Brevibacillus brevis (strain 47 / JCM 6285 / NBRC 100599).